A 486-amino-acid chain; its full sequence is Shutoff alkaline exonuclease (486 aa).

It belongs to the herpesviridae alkaline nuclease family. As to quaternary structure, forms a complex with the DNA polymerase, the DNA polymerase processivity factor, and the major DNA binding protein.

The protein localises to the host nucleus. It is found in the host cytoplasm. In terms of biological role, plays a role in processing non linear or branched viral DNA intermediates in order to promote the production of mature packaged unit-length linear progeny viral DNA molecules. Exhibits endonuclease and exonuclease activities and accepts both double-stranded and single-stranded DNA as substrate. Exonuclease digestion of DNA is in the 5'-&gt; 3' direction and the products are 5'-monophosphate nucleosides. Additionally, forms a recombinase with the major DNA-binding protein, which displays strand exchange activity. Also acts as a cytoplasmic RNA endonuclease that induces degradation of the majority of the cellular messenger RNAs during early lytic infection. The resulting inhibition of cellular protein synthesis serves to ensure maximal viral gene expression and evasion from host immune response. Internally cleaves host mRNAs which are then degraded by the cellular exonuclease XRN1. Bypasses therefore the regulatory steps of deadenylation and decapping normally required for XRN1 activation. In addition, inhibits host inflammasome activation to promote viral lytic replication by interacting with host AIM2 and disrupting its polymerization. This is Shutoff alkaline exonuclease (ORF37) from Human herpesvirus 8 type P (isolate GK18) (HHV-8).